The sequence spans 268 residues: 3-methyl-2-oxobutanoate hydroxymethyltransferase (268 aa).

Asp46 and Asp85 together coordinate Mg(2+). 3-methyl-2-oxobutanoate is bound by residues 46 to 47 (DS), Asp85, and Lys114. Residue Glu116 participates in Mg(2+) binding. The active-site Proton acceptor is Glu183.

It belongs to the PanB family. Homodecamer; pentamer of dimers. Mg(2+) serves as cofactor.

The protein localises to the cytoplasm. The enzyme catalyses 3-methyl-2-oxobutanoate + (6R)-5,10-methylene-5,6,7,8-tetrahydrofolate + H2O = 2-dehydropantoate + (6S)-5,6,7,8-tetrahydrofolate. It participates in cofactor biosynthesis; coenzyme A biosynthesis. In terms of biological role, catalyzes the reversible reaction in which hydroxymethyl group from 5,10-methylenetetrahydrofolate is transferred onto alpha-ketoisovalerate to form ketopantoate. In Sulfolobus acidocaldarius (strain ATCC 33909 / DSM 639 / JCM 8929 / NBRC 15157 / NCIMB 11770), this protein is 3-methyl-2-oxobutanoate hydroxymethyltransferase.